The sequence spans 149 residues: UPF0260 protein RCAP_rcc02083 (149 aa).

This sequence belongs to the UPF0260 family.

This chain is UPF0260 protein RCAP_rcc02083, found in Rhodobacter capsulatus (strain ATCC BAA-309 / NBRC 16581 / SB1003).